Consider the following 347-residue polypeptide: S-adenosylmethionine:tRNA ribosyltransferase-isomerase (347 aa).

It belongs to the QueA family. In terms of assembly, monomer.

Its subcellular location is the cytoplasm. The catalysed reaction is 7-aminomethyl-7-carbaguanosine(34) in tRNA + S-adenosyl-L-methionine = epoxyqueuosine(34) in tRNA + adenine + L-methionine + 2 H(+). It functions in the pathway tRNA modification; tRNA-queuosine biosynthesis. Its function is as follows. Transfers and isomerizes the ribose moiety from AdoMet to the 7-aminomethyl group of 7-deazaguanine (preQ1-tRNA) to give epoxyqueuosine (oQ-tRNA). The chain is S-adenosylmethionine:tRNA ribosyltransferase-isomerase from Pseudomonas aeruginosa (strain LESB58).